Reading from the N-terminus, the 654-residue chain is DNA ligase (654 aa).

NAD(+) contacts are provided by residues 37-41 (DEEYD), 86-87 (SM), and Glu113. Catalysis depends on Lys115, which acts as the N6-AMP-lysine intermediate. The NAD(+) site is built by Arg136, Glu170, and Lys308. Cys402, Cys405, Cys418, and Cys423 together coordinate Zn(2+). Positions 576–654 (ITQNAFSGKS…GEFERLKLEI (79 aa)) constitute a BRCT domain.

Belongs to the NAD-dependent DNA ligase family. LigA subfamily. Requires Mg(2+) as cofactor. Mn(2+) serves as cofactor.

It catalyses the reaction NAD(+) + (deoxyribonucleotide)n-3'-hydroxyl + 5'-phospho-(deoxyribonucleotide)m = (deoxyribonucleotide)n+m + AMP + beta-nicotinamide D-nucleotide.. DNA ligase that catalyzes the formation of phosphodiester linkages between 5'-phosphoryl and 3'-hydroxyl groups in double-stranded DNA using NAD as a coenzyme and as the energy source for the reaction. It is essential for DNA replication and repair of damaged DNA. This chain is DNA ligase, found in Campylobacter curvus (strain 525.92).